Reading from the N-terminus, the 148-residue chain is Ribonuclease 4 (148 aa).

A signal peptide spans 1-29; sequence MMDLQRTQSLLLLLVLTLLGLGLVQPSYG. Pyrrolidone carboxylic acid is present on Q30. R36, H41, K69, N72, and T73 together coordinate dUMP. H41 functions as the Proton acceptor in the catalytic mechanism. 4 cysteine pairs are disulfide-bonded: C54/C110, C68/C121, C86/C136, and C93/C100. The Proton donor role is filled by H145. F146 lines the dUMP pocket.

The protein belongs to the pancreatic ribonuclease family. Expressed in the cortical tubules of the kidney (at protein level). Also expressed in the medullary tubules of the kidney.

Its subcellular location is the secreted. Its function is as follows. Cleaves preferentially after uridine bases. Has antimicrobial activity against uropathogenic E.coli (UPEC). Probably contributes to urinary tract sterility. In Mus musculus (Mouse), this protein is Ribonuclease 4 (Rnase4).